Here is a 134-residue protein sequence, read N- to C-terminus: Profilin-4 (134 aa).

Cys13 and Cys118 are disulfide-bonded. The Involved in PIP2 interaction signature appears at 84–100 (AVIRGKKGSGGITIKKT). Thr114 is subject to Phosphothreonine.

It belongs to the profilin family. Occurs in many kinds of cells as a complex with monomeric actin in a 1:1 ratio. Post-translationally, phosphorylated by MAP kinases.

It is found in the cytoplasm. It localises to the cytoskeleton. Its function is as follows. Binds to actin and affects the structure of the cytoskeleton. At high concentrations, profilin prevents the polymerization of actin, whereas it enhances it at low concentrations. The polypeptide is Profilin-4 (Olea europaea (Common olive)).